Consider the following 330-residue polypeptide: MDPSTLFLLLIIAAGIILLAVFFTFVPVMLWISALAAGVKISIFTLIGMRLRRVIPNRVVNPLIKAHKAGLDVAINQLESHYLAGGNVDRVVNALIAAQRANIELTFARCAAIDLAGRDVLEAVQMSVNPKVIETPFIAGVAMDGIEVKAKARITVRANIDRLVGGAGEETIIARVGEGIVSTIGSSDNHKKVLENPDMISQTVLSKGLDSGTAFEILSIDIADVDIGKNIGAILQTDQAEADKNIAQAKAEERRAMAVAQEQEMRARVEEMRAKVVEAEAEVPLAMSEALRSGKIGVMDYLNMKNIDADTDMRDSFGKMTKDQNEEDHK.

2 helical membrane passes run 6-26 and 28-48; these read LFLL…FTFV and VMLW…TLIG.

Belongs to the flotillin-like FloA family. In terms of assembly, homooligomerizes.

Its subcellular location is the cell membrane. It is found in the membrane raft. In terms of biological role, found in functional membrane microdomains (FMM) that may be equivalent to eukaryotic membrane rafts. FMMs are highly dynamic and increase in number as cells age. Flotillins are thought to be important factors in membrane fluidity. This is Flotillin-like protein FloA from Bacillus licheniformis (strain ATCC 14580 / DSM 13 / JCM 2505 / CCUG 7422 / NBRC 12200 / NCIMB 9375 / NCTC 10341 / NRRL NRS-1264 / Gibson 46).